The following is a 382-amino-acid chain: Galactokinase (382 aa).

34–37 (EHTD) is a binding site for substrate. ATP is bound at residue 124-130 (GAGLSSS). Residues Ser130 and Glu162 each coordinate Mg(2+). The Proton acceptor role is filled by Asp174. Tyr223 contributes to the substrate binding site.

Belongs to the GHMP kinase family. GalK subfamily.

It is found in the cytoplasm. The enzyme catalyses alpha-D-galactose + ATP = alpha-D-galactose 1-phosphate + ADP + H(+). Its pathway is carbohydrate metabolism; galactose metabolism. Its function is as follows. Catalyzes the transfer of the gamma-phosphate of ATP to D-galactose to form alpha-D-galactose-1-phosphate (Gal-1-P). This chain is Galactokinase, found in Escherichia coli O127:H6 (strain E2348/69 / EPEC).